Here is a 455-residue protein sequence, read N- to C-terminus: Lysine histidine transporter-like 4 (455 aa).

Residues 1–38 (MAGIPDHIQDQHLVEEDQPFDLEDWLPITASRNANWYY) lie on the Cytoplasmic side of the membrane. A helical transmembrane segment spans residues 39 to 59 (SAFHNVTAIVGAGVLGLPYAM). Over 60 to 61 (SE) the chain is Extracellular. A helical membrane pass occupies residues 62-82 (LGWGPGVVVLILSWVITLYTL). Residues 83–113 (WQMIEMHEMFEGQRFDRYHELGQAAFGKKLG) are Cytoplasmic-facing. Residues 114-134 (LYIIVPLQLLVEISVCIVYMV) form a helical membrane-spanning segment. Topologically, residues 135 to 158 (TGGKSLKNVHDLALGDGDKCTKLR) are extracellular. The chain crosses the membrane as a helical span at residues 159 to 179 (IQHFILIFASSQFVLSLLKNF). Residues 180–181 (NS) are Cytoplasmic-facing. A helical membrane pass occupies residues 182–202 (ISGVSLVAAVMSVSYSTIAWV). The Extracellular portion of the chain corresponds to 203–226 (ASLRKGATTGSVEYGYRKRTTSVP). A helical membrane pass occupies residues 227 to 247 (LAFLSALGEMAFAYAGHNVVL). Residues 248 to 267 (EIQATIPSTPENPSKRPMWK) lie on the Cytoplasmic side of the membrane. A helical transmembrane segment spans residues 268–288 (GAVVAYIIVAFCYFPVALVGF). Residues 289-307 (KTFGNSVEESILESLTKPT) lie on the Extracellular side of the membrane. Residues 308-328 (ALVIVANMFVVIHLLGSYQVY) traverse the membrane as a helical segment. At 329–357 (AMPVFDMIESVMIRIWHFSPTRVLRFTIR) the chain is on the cytoplasmic side. The chain crosses the membrane as a helical span at residues 358–378 (WTFVAATMGIAVGLPYYSALL). Position 379 (serine 379) is a topological domain, extracellular. A helical membrane pass occupies residues 380 to 400 (FFGGFVFAPTTYFIPCIMWLI). The Cytoplasmic segment spans residues 401-412 (LKKPKRFSLSWC). The chain crosses the membrane as a helical span at residues 413–433 (MNWFCIIFGLVLMIIAPIGGL). Over 434-455 (AKLIYNIQKGTLPNSRCNLPKH) the chain is Extracellular.

It belongs to the amino acid/polyamine transporter 2 family. Amino acid/auxin permease (AAAP) (TC 2.A.18.2) subfamily.

It localises to the cell membrane. In terms of biological role, amino acid transporter. This chain is Lysine histidine transporter-like 4, found in Arabidopsis thaliana (Mouse-ear cress).